Reading from the N-terminus, the 148-residue chain is MTIIPKRSYNVLTTCKAVFRDVGDYWLTTGNLRTTKPQSPAQGFHRDTLLYPVLQYQPATSPSLIVTLLVSMTDATVANGATRVILSSQNGRLLNTIGGPGRASRAKRWGHAGNPSAAAARWWEAYESGTEYKTNATNFLHKMLASCS.

2 residues coordinate Fe cation: His45 and Asp47.

It belongs to the PhyH family. Homodimer. Fe cation is required as a cofactor.

It participates in secondary metabolite biosynthesis; terpenoid biosynthesis. Its function is as follows. Iron/alpha-ketoglutarate-dependent dioxygenase; part of the gene cluster B that mediates the biosynthesis of austinol and dehydroaustinol, two fungal meroterpenoids. The first step of the pathway is the synthesis of 3,5-dimethylorsellinic acid by the polyketide synthase ausA. 3,5-dimethylorsellinic acid is then prenylated by the polyprenyl transferase ausN. Further epoxidation by the FAD-dependent monooxygenase ausM and cyclization by the probable terpene cyclase ausL lead to the formation of protoaustinoid A. Protoaustinoid A is then oxidized to spiro-lactone preaustinoid A3 by the combined action of the FAD-binding monooxygenases ausB and ausC, and the dioxygenase ausE. Acid-catalyzed keto-rearrangement and ring contraction of the tetraketide portion of preaustinoid A3 by ausJ lead to the formation of preaustinoid A4. The aldo-keto reductase ausK, with the help of ausH, is involved in the next step by transforming preaustinoid A4 into isoaustinone which is in turn hydroxylated by the P450 monooxygenase ausI to form austinolide. Finally, the cytochrome P450 monooxygenase ausG modifies austinolide to austinol. Austinol can be further modified to dehydroaustinol which forms a diffusible complex with diorcinol that initiates conidiation. Due to genetic rearrangements of the clusters and the subsequent loss of some enzymes, the end products of the Emericella nidulans austinoid biosynthesis clusters are austinol and dehydroaustinol, even if additional enzymes, such as the O-acetyltransferase ausQ and the cytochrome P450 monooxygenase ausR are still functional. The polypeptide is Iron/alpha-ketoglutarate-dependent dioxygenase ausU (Emericella nidulans (strain FGSC A4 / ATCC 38163 / CBS 112.46 / NRRL 194 / M139) (Aspergillus nidulans)).